We begin with the raw amino-acid sequence, 438 residues long: 3-phosphoshikimate 1-carboxyvinyltransferase 1 (438 aa).

The 3-phosphoshikimate site is built by Lys-30, Ser-31, and Arg-35. Lys-30 is a binding site for phosphoenolpyruvate. Phosphoenolpyruvate is bound by residues Gly-104 and Arg-132. Residues Ser-178, Ser-179, Gln-180, Ser-207, Glu-326, and His-353 each contribute to the 3-phosphoshikimate site. Gln-180 provides a ligand contact to phosphoenolpyruvate. Glu-326 acts as the Proton acceptor in catalysis. Phosphoenolpyruvate contacts are provided by Arg-357, Arg-398, and Lys-423.

It belongs to the EPSP synthase family. Monomer.

The protein localises to the cytoplasm. The catalysed reaction is 3-phosphoshikimate + phosphoenolpyruvate = 5-O-(1-carboxyvinyl)-3-phosphoshikimate + phosphate. It participates in metabolic intermediate biosynthesis; chorismate biosynthesis; chorismate from D-erythrose 4-phosphate and phosphoenolpyruvate: step 6/7. In terms of biological role, catalyzes the transfer of the enolpyruvyl moiety of phosphoenolpyruvate (PEP) to the 5-hydroxyl of shikimate-3-phosphate (S3P) to produce enolpyruvyl shikimate-3-phosphate and inorganic phosphate. This Streptomyces coelicolor (strain ATCC BAA-471 / A3(2) / M145) protein is 3-phosphoshikimate 1-carboxyvinyltransferase 1.